Reading from the N-terminus, the 356-residue chain is Popeye domain-containing protein 1 (356 aa).

Over 1–48 the chain is Extracellular; the sequence is MNFTEPSPLAQSTVVGFLPELESLTPVPSNETSCENWREVHHLVFHAA. 2 N-linked (GlcNAc...) asparagine glycosylation sites follow: Asn2 and Asn30. The helical transmembrane segment at 49–69 threads the bilayer; sequence NVCFAVGLLIPTTLHLHMILL. Residue Arg70 is a topological domain, cytoplasmic. A helical membrane pass occupies residues 71 to 91; the sequence is VMLSIGCTLYVVWATLYRCAL. Position 92 (Asp92) is a topological domain, extracellular. A helical membrane pass occupies residues 93-113; it reads MMIWNSVFLGINILHLSYLLY. The interval 93–115 is required for interaction with CAV3; sequence MMIWNSVFLGINILHLSYLLYKK. The Cytoplasmic segment spans residues 114-356; sequence KKRPVKIEKD…VPVSPAHQLP (243 aa). The segment at 136-186 is required for interaction with KCNK2; that stretch reads RVPPDLFRRLTGQFCVIQTLKRGQVYATEDKTSVDDRLSILLKGRMKVSYR. Phosphoserine occurs at positions 295 and 318. A compositionally biased stretch (low complexity) spans 313 to 323; sequence SSSTASLPMSS. The segment at 313 to 356 is disordered; sequence SSSTASLPMSSPQQRASPKMKPIEEGLEDDDEVFVPVSPAHQLP.

This sequence belongs to the popeye family. Homodimer. Homodimerization requires the C-terminus cytoplasmic region. Interacts (via the C-terminus cytoplasmic tail) with TJP1. Interacts (via the C-terminus cytoplasmic tail) with ARHGEF25/GEFT (via the DH domain). Interacts (via the C-terminus cytoplasmic tail) with VAMP3. Interacts with KCNK2; the interaction enhances KCNK2 surface expression and is inhibited by cAMP. Interacts with CAV3. In terms of tissue distribution, strongly expressed in heart and skeletal muscle. Weakly expressed in brain, spleen, liver, kidney and lung.

It localises to the lateral cell membrane. The protein resides in the cell junction. Its subcellular location is the tight junction. The protein localises to the membrane. It is found in the cell membrane. It localises to the sarcolemma. The protein resides in the caveola. In terms of biological role, cell adhesion molecule involved in the establishment and/or maintenance of cell integrity. Involved in the formation and regulation of the tight junction (TJ) paracellular permeability barrier in epithelial cells. Plays a role in VAMP3-mediated vesicular transport and recycling of different receptor molecules through its interaction with VAMP3. Plays a role in the regulation of cell shape and movement by modulating the Rho-family GTPase activity through its interaction with ARHGEF25/GEFT. Induces primordial adhesive contact and aggregation of epithelial cells in a Ca(2+)-independent manner. Important for skeletal muscle and heart development. Also involved in striated muscle regeneration and repair and in the regulation of cell spreading. Important for the maintenance of cardiac function. Plays a regulatory function in heart rate dynamics mediated, at least in part, through cAMP-binding and, probably, by increasing cell surface expression of the potassium channel KCNK2 and enhancing current density. Is a caveolae-associated protein important for the preservation of caveolae structural and functional integrity as well as for heart protection against ischemia injury. The chain is Popeye domain-containing protein 1 (Popdc1) from Rattus norvegicus (Rat).